We begin with the raw amino-acid sequence, 139 residues long: Centromere protein S (139 aa).

The interval 99–139 (ELASSNMEQKEKKKKKSSAAKGRKTEENETPVTESEDSNMA) is disordered. A compositionally biased stretch (basic residues) spans 110-120 (KKKKKSSAAKG).

This sequence belongs to the TAF9 family. CENP-S/MHF1 subfamily. As to quaternary structure, heterodimer with CENPX, sometimes called MHF; this interaction stabilizes both partners. MHF heterodimers can assemble to form tetrameric structures. MHF also coassemble with CENPT-CENPW heterodimers at centromeres to form the tetrameric CENP-T-W-S-X complex. Forms a discrete complex with FANCM and CENPX, called FANCM-MHF; this interaction, probably mediated by direct binding between CENPS and FANCM, leads to synergistic activation of double-stranded DNA binding and strongly stimulates FANCM-mediated DNA remodeling. Recruited by FANCM to the Fanconi anemia (FA) core complex, which consists of CENPS, CENPX, FANCA, FANCB, FANCC, FANCE, FANCF, FANCG, FANCL, FANCM, FAAP24 and FAAP100. The FA core complex associates with Bloom syndrome (BLM) complex, which consists of at least BLM, DNA topoisomerase 3-alpha (TOP3A), RMI1/BLAP75, RPA1/RPA70 and RPA2/RPA32. The super complex between FA and BLM is called BRAFT. Component of the CENPA-CAD complex, composed of CENPI, CENPK, CENPL, CENPO, CENPP, CENPQ, CENPR and CENPS. The CENPA-CAD complex is probably recruited on centromeres by the CENPA-NAC complex, at least composed of CENPA, CENPC, CENPH, CENPM, CENPN, CENPT and CENPU.

It localises to the nucleus. The protein resides in the chromosome. It is found in the centromere. The protein localises to the kinetochore. DNA-binding component of the Fanconi anemia (FA) core complex. Required for the normal activation of the FA pathway, leading to monoubiquitination of the FANCI-FANCD2 complex in response to DNA damage, cellular resistance to DNA cross-linking drugs, and prevention of chromosomal breakage. In complex with CENPX (MHF heterodimer), crucial cofactor for FANCM in both binding and ATP-dependent remodeling of DNA. Stabilizes FANCM. In complex with CENPX and FANCM (but not other FANC proteins), rapidly recruited to blocked forks and promotes gene conversion at blocked replication forks. In complex with CENPT, CENPW and CENPX (CENP-T-W-S-X heterotetramer), involved in the formation of a functional kinetochore outer plate, which is essential for kinetochore-microtubule attachment and faithful mitotic progression. As a component of MHF and CENP-T-W-S-X complexes, binds DNA and bends it to form a nucleosome-like structure. DNA-binding function is fulfilled in the presence of CENPX, with the following preference for DNA substates: Holliday junction &gt; double-stranded &gt; splay arm &gt; single-stranded. Does not bind DNA on its own. In Gallus gallus (Chicken), this protein is Centromere protein S (CENPS).